We begin with the raw amino-acid sequence, 504 residues long: Maturase K (504 aa).

It belongs to the intron maturase 2 family. MatK subfamily.

The protein resides in the plastid. It is found in the chloroplast. Its function is as follows. Usually encoded in the trnK tRNA gene intron. Probably assists in splicing its own and other chloroplast group II introns. The protein is Maturase K of Alliaria petiolata (Garlic mustard).